A 253-amino-acid chain; its full sequence is uncharacterized protein (253 aa).

This is an uncharacterized protein from Mycobacterium bovis (strain ATCC BAA-935 / AF2122/97).